The primary structure comprises 154 residues: MTEVEERINAWNDGFEELLSYIPAKLYYREHTANQWKQKKSTLEEKKERRKMKFSLDGLVNDADDDSQKSSKWEQSSTMSDDTDVSDRHAESMSQIRGKLASKIQDLREKRKAGDLNQKRQNKRPVENEKDSQKGSGKSKVQKKKHKASPRAGF.

Residues 36-154 (WKQKKSTLEE…KHKASPRAGF (119 aa)) are disordered. Ser80 is modified (phosphoserine). Thr83 is subject to Phosphothreonine. A compositionally biased stretch (basic and acidic residues) spans 105–133 (QDLREKRKAGDLNQKRQNKRPVENEKDSQ). Residues 140–154 (KVQKKKHKASPRAGF) are compositionally biased toward basic residues.

It belongs to the SURF6 family.

The protein localises to the nucleus. Its subcellular location is the nucleolus. Functionally, involved in ribosome biogenesis and cell polarity. Required for the synthesis of both 40S and 60S ribosomal subunits and may also play some direct role in correct positioning of the mitotic spindle during mitosis. In Schizosaccharomyces pombe (strain 972 / ATCC 24843) (Fission yeast), this protein is Ribosomal RNA-processing protein 14-N (rrp14n).